Reading from the N-terminus, the 704-residue chain is Elongation factor G (704 aa).

Residues 6–282 form the tr-type G domain; it reads NKVRNIGIMA…AVIDYLPTPL (277 aa). GTP contacts are provided by residues 15–22, 79–83, and 133–136; these read AHIDAGKT, DTPGH, and NKMD.

The protein belongs to the TRAFAC class translation factor GTPase superfamily. Classic translation factor GTPase family. EF-G/EF-2 subfamily.

It localises to the cytoplasm. Its function is as follows. Catalyzes the GTP-dependent ribosomal translocation step during translation elongation. During this step, the ribosome changes from the pre-translocational (PRE) to the post-translocational (POST) state as the newly formed A-site-bound peptidyl-tRNA and P-site-bound deacylated tRNA move to the P and E sites, respectively. Catalyzes the coordinated movement of the two tRNA molecules, the mRNA and conformational changes in the ribosome. This chain is Elongation factor G, found in Corynebacterium diphtheriae (strain ATCC 700971 / NCTC 13129 / Biotype gravis).